The primary structure comprises 160 residues: Cyclic pyranopterin monophosphate synthase (160 aa).

Residues 77–79 (MCH) and 114–115 (ME) each bind substrate. Aspartate 129 is an active-site residue.

Belongs to the MoaC family. In terms of assembly, homohexamer; trimer of dimers.

It carries out the reaction (8S)-3',8-cyclo-7,8-dihydroguanosine 5'-triphosphate = cyclic pyranopterin phosphate + diphosphate. It functions in the pathway cofactor biosynthesis; molybdopterin biosynthesis. Its function is as follows. Catalyzes the conversion of (8S)-3',8-cyclo-7,8-dihydroguanosine 5'-triphosphate to cyclic pyranopterin monophosphate (cPMP). The polypeptide is Cyclic pyranopterin monophosphate synthase (Listeria monocytogenes serovar 1/2a (strain ATCC BAA-679 / EGD-e)).